We begin with the raw amino-acid sequence, 126 residues long: Small ribosomal subunit protein uS13 (126 aa).

Residues 92 to 126 are disordered; sequence HRRGLPVRGQRTKTNARTRKGPRKTVAGKKKATRK.

It belongs to the universal ribosomal protein uS13 family. As to quaternary structure, part of the 30S ribosomal subunit. Forms a loose heterodimer with protein S19. Forms two bridges to the 50S subunit in the 70S ribosome.

In terms of biological role, located at the top of the head of the 30S subunit, it contacts several helices of the 16S rRNA. In the 70S ribosome it contacts the 23S rRNA (bridge B1a) and protein L5 of the 50S subunit (bridge B1b), connecting the 2 subunits; these bridges are implicated in subunit movement. Contacts the tRNAs in the A and P-sites. The protein is Small ribosomal subunit protein uS13 of Deinococcus geothermalis (strain DSM 11300 / CIP 105573 / AG-3a).